Here is a 546-residue protein sequence, read N- to C-terminus: Chaperonin GroEL (546 aa).

Residues 30–33, lysine 51, 87–91, glycine 415, 479–481, and aspartate 495 contribute to the ATP site; these read TLGP, DGTTT, and NAA. Residues 526-546 form a disordered region; the sequence is KEDAPMPGGMPGGMGGMGMDM. Gly residues predominate over residues 534 to 546; that stretch reads GMPGGMGGMGMDM.

The protein belongs to the chaperonin (HSP60) family. In terms of assembly, forms a cylinder of 14 subunits composed of two heptameric rings stacked back-to-back. Interacts with the co-chaperonin GroES.

It is found in the cytoplasm. It carries out the reaction ATP + H2O + a folded polypeptide = ADP + phosphate + an unfolded polypeptide.. Functionally, together with its co-chaperonin GroES, plays an essential role in assisting protein folding. The GroEL-GroES system forms a nano-cage that allows encapsulation of the non-native substrate proteins and provides a physical environment optimized to promote and accelerate protein folding. This Burkholderia cepacia (Pseudomonas cepacia) protein is Chaperonin GroEL.